Here is a 498-residue protein sequence, read N- to C-terminus: U4/U6 small nuclear ribonucleoprotein Prp31 (498 aa).

Coiled coils occupy residues 84–119 (EAAP…KYSK) and 180–214 (DEEL…MSFI). Positions 214 to 332 (IAPNLSIIVG…IERKFDKWQE (119 aa)) constitute a Nop domain. Residues 333–356 (PPPVKQVKPLPAPLDGQRKKRGGR) form a disordered region. Positions 350–363 (RKKRGGRRYRKMKE) match the Nuclear localization signal (NLS) motif.

This sequence belongs to the PRP31 family. In terms of assembly, identified in the spliceosome B complex. Component of the U4/U6-U5 tri-snRNP complex. Component of some MLL1/MLL complex.

It is found in the nucleus. The protein resides in the nucleus speckle. Its subcellular location is the cajal body. Involved in pre-mRNA splicing as component of the spliceosome. Required for the assembly of the U4/U5/U6 tri-snRNP complex, one of the building blocks of the spliceosome. In Xenopus tropicalis (Western clawed frog), this protein is U4/U6 small nuclear ribonucleoprotein Prp31 (prpf31).